The primary structure comprises 539 residues: Glucose-6-phosphate isomerase (539 aa).

The active-site Proton donor is Glu340. Residues His371 and Lys500 contribute to the active site.

Belongs to the GPI family.

Its subcellular location is the cytoplasm. The catalysed reaction is alpha-D-glucose 6-phosphate = beta-D-fructose 6-phosphate. It functions in the pathway carbohydrate biosynthesis; gluconeogenesis. The protein operates within carbohydrate degradation; glycolysis; D-glyceraldehyde 3-phosphate and glycerone phosphate from D-glucose: step 2/4. Catalyzes the reversible isomerization of glucose-6-phosphate to fructose-6-phosphate. This chain is Glucose-6-phosphate isomerase, found in Ruegeria pomeroyi (strain ATCC 700808 / DSM 15171 / DSS-3) (Silicibacter pomeroyi).